The following is an 891-amino-acid chain: DNA mismatch repair protein MutS (891 aa).

Residue 617–624 (GPNMSGKS) participates in ATP binding. Residues 805–827 (REKIEEEEPKTKDTKRGPSEKVK) show a composition bias toward basic and acidic residues. Residues 805 to 840 (REKIEEEEPKTKDTKRGPSEKVKNASPTLPRDEKGR) form a disordered region.

It belongs to the DNA mismatch repair MutS family.

In terms of biological role, this protein is involved in the repair of mismatches in DNA. It is possible that it carries out the mismatch recognition step. This protein has a weak ATPase activity. The sequence is that of DNA mismatch repair protein MutS from Porphyromonas gingivalis (strain ATCC BAA-308 / W83).